The chain runs to 109 residues: Phosphoribosyl-ATP pyrophosphatase (109 aa).

Belongs to the PRA-PH family.

Its subcellular location is the cytoplasm. It catalyses the reaction 1-(5-phospho-beta-D-ribosyl)-ATP + H2O = 1-(5-phospho-beta-D-ribosyl)-5'-AMP + diphosphate + H(+). It participates in amino-acid biosynthesis; L-histidine biosynthesis; L-histidine from 5-phospho-alpha-D-ribose 1-diphosphate: step 2/9. The sequence is that of Phosphoribosyl-ATP pyrophosphatase from Paramagnetospirillum magneticum (strain ATCC 700264 / AMB-1) (Magnetospirillum magneticum).